A 401-amino-acid chain; its full sequence is UPF0242 protein CCA_01002 (401 aa).

The protein belongs to the UPF0242 family.

In Chlamydia caviae (strain ATCC VR-813 / DSM 19441 / 03DC25 / GPIC) (Chlamydophila caviae), this protein is UPF0242 protein CCA_01002.